A 626-amino-acid chain; its full sequence is Chaperone protein HtpG (626 aa).

The tract at residues 1–339 (MSQNQETRGF…SNDLPLNVSR (339 aa)) is a; substrate-binding. Residues 340–555 (EILQDNKITA…NDQMTTQMAK (216 aa)) are b. Residues 556–626 (LFAAAGQPVP…FIKRINKLLG (71 aa)) are c.

The protein belongs to the heat shock protein 90 family. As to quaternary structure, homodimer.

It localises to the cytoplasm. Functionally, molecular chaperone. Has ATPase activity. This is Chaperone protein HtpG from Haemophilus influenzae (strain PittGG).